The following is a 487-amino-acid chain: MNKNKIIRTRYAPSPTGLFHIGGARTALFNYLFAKKNNGDFIVRIEDTDIDRNVENGIESQLLNLKWLKIFPDESPLNPGNYGPYIQTERLPIYKEKAEQLLKEKKAYRCFCTPEQLEKNRKKALKDGKTPKYNRTCLSLSEDQISEKIKNNIPFSLRFKITDNTEIKWNDIVRGEMCVPTSALTDPVILKSNGIPTYNFAVVIDDNDMLISHIIRGEEHLSNTPYQIAINEALDINKNIVFGHLSVIIDETGKKLSKRNMELKQFIEDYKNMGFSPEAIVNFMYLLGLSSSDNKEIFSLAEAVKNFDIKKVSKSPTTFDFKKMEWISSEHFKMMSDSAFISFAKPFITIDLGFLKGNENDVILLFKNQIAYAKQINDLIDETFFSPETFAAVCEKFPFLKQADTKELIKVFIKQLQELPNWNISEIATVIDAVKKQTGKSGKELFMPIRVYSSHNSHGPELAKVIFILGKDKVIKNAKSFLDNKGA.

Positions 13–23 (PSPTGLFHIGG) match the 'HIGH' region motif. Positions 255 to 259 (KLSKR) match the 'KMSKS' region motif. K258 contacts ATP.

The protein belongs to the class-I aminoacyl-tRNA synthetase family. Glutamate--tRNA ligase type 1 subfamily. In terms of assembly, monomer.

It localises to the cytoplasm. It carries out the reaction tRNA(Glu) + L-glutamate + ATP = L-glutamyl-tRNA(Glu) + AMP + diphosphate. Functionally, catalyzes the attachment of glutamate to tRNA(Glu) in a two-step reaction: glutamate is first activated by ATP to form Glu-AMP and then transferred to the acceptor end of tRNA(Glu). In Malacoplasma penetrans (strain HF-2) (Mycoplasma penetrans), this protein is Glutamate--tRNA ligase.